Here is a 229-residue protein sequence, read N- to C-terminus: tRNA pseudouridine synthase B (229 aa).

The Nucleophile role is filled by Asp-42.

Belongs to the pseudouridine synthase TruB family. Type 1 subfamily.

The enzyme catalyses uridine(55) in tRNA = pseudouridine(55) in tRNA. Functionally, responsible for synthesis of pseudouridine from uracil-55 in the psi GC loop of transfer RNAs. The sequence is that of tRNA pseudouridine synthase B from Ureaplasma urealyticum serovar 10 (strain ATCC 33699 / Western).